Here is a 207-residue protein sequence, read N- to C-terminus: Outer-membrane lipoprotein LolB (207 aa).

The N-terminal stretch at 1 to 21 (MPLPDFRLIRLLPLAALVLTA) is a signal peptide. Cys22 carries N-palmitoyl cysteine lipidation. Cys22 carries the S-diacylglycerol cysteine lipid modification.

This sequence belongs to the LolB family. Monomer.

The protein resides in the cell outer membrane. Functionally, plays a critical role in the incorporation of lipoproteins in the outer membrane after they are released by the LolA protein. This chain is Outer-membrane lipoprotein LolB, found in Escherichia coli (strain K12 / MC4100 / BW2952).